The sequence spans 555 residues: 2-succinyl-5-enolpyruvyl-6-hydroxy-3-cyclohexene-1-carboxylate synthase (555 aa).

Belongs to the TPP enzyme family. MenD subfamily. As to quaternary structure, homodimer. Mg(2+) serves as cofactor. Requires Mn(2+) as cofactor. It depends on thiamine diphosphate as a cofactor.

It carries out the reaction isochorismate + 2-oxoglutarate + H(+) = 5-enolpyruvoyl-6-hydroxy-2-succinyl-cyclohex-3-ene-1-carboxylate + CO2. It participates in quinol/quinone metabolism; 1,4-dihydroxy-2-naphthoate biosynthesis; 1,4-dihydroxy-2-naphthoate from chorismate: step 2/7. Its pathway is quinol/quinone metabolism; menaquinone biosynthesis. Catalyzes the thiamine diphosphate-dependent decarboxylation of 2-oxoglutarate and the subsequent addition of the resulting succinic semialdehyde-thiamine pyrophosphate anion to isochorismate to yield 2-succinyl-5-enolpyruvyl-6-hydroxy-3-cyclohexene-1-carboxylate (SEPHCHC). In Cronobacter sakazakii (strain ATCC BAA-894) (Enterobacter sakazakii), this protein is 2-succinyl-5-enolpyruvyl-6-hydroxy-3-cyclohexene-1-carboxylate synthase.